Here is a 482-residue protein sequence, read N- to C-terminus: ATP synthase subunit beta (482 aa).

Position 168 to 175 (168 to 175) interacts with ATP; that stretch reads GGAGVGKT.

This sequence belongs to the ATPase alpha/beta chains family. As to quaternary structure, F-type ATPases have 2 components, CF(1) - the catalytic core - and CF(0) - the membrane proton channel. CF(1) has five subunits: alpha(3), beta(3), gamma(1), delta(1), epsilon(1). CF(0) has three main subunits: a(1), b(2) and c(9-12). The alpha and beta chains form an alternating ring which encloses part of the gamma chain. CF(1) is attached to CF(0) by a central stalk formed by the gamma and epsilon chains, while a peripheral stalk is formed by the delta and b chains.

Its subcellular location is the cell membrane. The enzyme catalyses ATP + H2O + 4 H(+)(in) = ADP + phosphate + 5 H(+)(out). Functionally, produces ATP from ADP in the presence of a proton gradient across the membrane. The catalytic sites are hosted primarily by the beta subunits. The chain is ATP synthase subunit beta from Corynebacterium urealyticum (strain ATCC 43042 / DSM 7109).